The sequence spans 72 residues: Exodeoxyribonuclease 7 small subunit (72 aa).

Belongs to the XseB family. Heterooligomer composed of large and small subunits.

The protein localises to the cytoplasm. The catalysed reaction is Exonucleolytic cleavage in either 5'- to 3'- or 3'- to 5'-direction to yield nucleoside 5'-phosphates.. Bidirectionally degrades single-stranded DNA into large acid-insoluble oligonucleotides, which are then degraded further into small acid-soluble oligonucleotides. The chain is Exodeoxyribonuclease 7 small subunit from Chlamydia trachomatis serovar D (strain ATCC VR-885 / DSM 19411 / UW-3/Cx).